Consider the following 338-residue polypeptide: MKVFYDKDADLSLIKGKKVTIIGYGSQGHAHALNLKDSGCNVTVGLRKGGASWSKAENAGLTVKEVGEAVKDADVVMMLLPDEQIADVYNKEVHGNIKQGAALAFAHGFNVHYGQVQPRADLDVIMIAPKAPGHTVRGTYSQGGGVPHLIAVYQDKSGSARDVALSYATANGGGRAGIIETNFREETETDLFGEQAVLCGGAVDLIKTGFEVLVEAGYAPEMAYFECLHELKLIVDLIYEGGIANMNYSISNNAEYGEYVTGPRVVTEDTKNAMRQCLKDIQTGEYAKSFILENKAGAPTLISRRRLNAEHEIEIVGAKLRAMMPWIAKNKLVDQTKN.

In terms of domain architecture, KARI N-terminal Rossmann spans M1–T181. Residues Y24–Q27, R47, and S52 each bind NADP(+). The active site involves H107. G133 is a binding site for NADP(+). The region spanning N182–I327 is the KARI C-terminal knotted domain. D190, E194, E226, and E230 together coordinate Mg(2+). A substrate-binding site is contributed by S251.

It belongs to the ketol-acid reductoisomerase family. Requires Mg(2+) as cofactor.

The enzyme catalyses (2R)-2,3-dihydroxy-3-methylbutanoate + NADP(+) = (2S)-2-acetolactate + NADPH + H(+). It carries out the reaction (2R,3R)-2,3-dihydroxy-3-methylpentanoate + NADP(+) = (S)-2-ethyl-2-hydroxy-3-oxobutanoate + NADPH + H(+). Its pathway is amino-acid biosynthesis; L-isoleucine biosynthesis; L-isoleucine from 2-oxobutanoate: step 2/4. The protein operates within amino-acid biosynthesis; L-valine biosynthesis; L-valine from pyruvate: step 2/4. Involved in the biosynthesis of branched-chain amino acids (BCAA). Catalyzes an alkyl-migration followed by a ketol-acid reduction of (S)-2-acetolactate (S2AL) to yield (R)-2,3-dihydroxy-isovalerate. In the isomerase reaction, S2AL is rearranged via a Mg-dependent methyl migration to produce 3-hydroxy-3-methyl-2-ketobutyrate (HMKB). In the reductase reaction, this 2-ketoacid undergoes a metal-dependent reduction by NADPH to yield (R)-2,3-dihydroxy-isovalerate. The chain is Ketol-acid reductoisomerase (NADP(+)) from Polynucleobacter asymbioticus (strain DSM 18221 / CIP 109841 / QLW-P1DMWA-1) (Polynucleobacter necessarius subsp. asymbioticus).